The following is a 1238-amino-acid chain: ATP-dependent helicase/nuclease subunit A (1238 aa).

The UvrD-like helicase ATP-binding domain occupies 6-474 (TKWTETQKSA…IKLSENFRSR (469 aa)). 27–34 (AGAGTGKT) contributes to the ATP binding site. Positions 512–811 (PFEGNCGGDV…RIMSIHKSKG (300 aa)) constitute a UvrD-like helicase C-terminal domain.

It belongs to the helicase family. AddA subfamily. Heterodimer of AddA and AddB/RexB. The cofactor is Mg(2+).

It catalyses the reaction Couples ATP hydrolysis with the unwinding of duplex DNA by translocating in the 3'-5' direction.. It carries out the reaction ATP + H2O = ADP + phosphate + H(+). The heterodimer acts as both an ATP-dependent DNA helicase and an ATP-dependent, dual-direction single-stranded exonuclease. Recognizes the chi site generating a DNA molecule suitable for the initiation of homologous recombination. The AddA nuclease domain is required for chi fragment generation; this subunit has the helicase and 3' -&gt; 5' nuclease activities. This chain is ATP-dependent helicase/nuclease subunit A, found in Clostridium kluyveri (strain NBRC 12016).